The sequence spans 645 residues: Threonine--tRNA ligase (645 aa).

A TGS domain is found at 1 to 61 (MPVITLPDGS…SDDAKLSIIT (61 aa)). A catalytic region spans residues 243–534 (DHRKLGKKLD…LIEDTEGAFP (292 aa)). Positions 334, 385, and 511 each coordinate Zn(2+).

It belongs to the class-II aminoacyl-tRNA synthetase family. Homodimer. Requires Zn(2+) as cofactor.

The protein resides in the cytoplasm. It catalyses the reaction tRNA(Thr) + L-threonine + ATP = L-threonyl-tRNA(Thr) + AMP + diphosphate + H(+). Catalyzes the attachment of threonine to tRNA(Thr) in a two-step reaction: L-threonine is first activated by ATP to form Thr-AMP and then transferred to the acceptor end of tRNA(Thr). Also edits incorrectly charged L-seryl-tRNA(Thr). The protein is Threonine--tRNA ligase of Marinomonas sp. (strain MWYL1).